A 220-amino-acid polypeptide reads, in one-letter code: Regulatory protein VanRB (220 aa).

The 114-residue stretch at R4–L117 folds into the Response regulatory domain. D53 carries the 4-aspartylphosphate modification. Positions A124–E218 form a DNA-binding region, ompR/PhoB-type.

Post-translationally, may be phosphorylated by VanSB. May also be dephosphorylated by VanSB.

Its subcellular location is the cytoplasm. Its function is as follows. Member of the two-component regulatory system VanSB/VanRB. Activates the transcription of vanSB, vanYB and vanW in response to vancomycin which results in vancomycin resistance. This is Regulatory protein VanRB (vanRB) from Enterococcus faecalis (strain ATCC 700802 / V583).